A 267-amino-acid chain; its full sequence is Small ribosomal subunit protein uS3 (267 aa).

In terms of domain architecture, KH type-2 spans 43–111 (IRKEMSKDLE…QVQLNIFEVK (69 aa)). The interval 216–267 (FEEQQAQQNNRPGRRGGDRRPRRGNRSAAPQAAEAPKAEAPAEAAPAAETKE) is disordered. Over residues 241–267 (RSAAPQAAEAPKAEAPAEAAPAAETKE) the composition is skewed to low complexity.

It belongs to the universal ribosomal protein uS3 family. Part of the 30S ribosomal subunit. Forms a tight complex with proteins S10 and S14.

Binds the lower part of the 30S subunit head. Binds mRNA in the 70S ribosome, positioning it for translation. In Bifidobacterium longum subsp. infantis (strain ATCC 15697 / DSM 20088 / JCM 1222 / NCTC 11817 / S12), this protein is Small ribosomal subunit protein uS3.